Consider the following 439-residue polypeptide: Probable cinnamyl alcohol dehydrogenase 8C (439 aa).

Residue C120 participates in Zn(2+) binding. T122 contributes to the NADP(+) binding site. Zn(2+)-binding residues include H142, E143, C173, C176, C179, C187, and C239. Residues T243, 264–269 (GLGGLG), 287–292 (STSPGK), T327, G351, and 374–376 (NCV) each bind NADP(+).

Belongs to the zinc-containing alcohol dehydrogenase family. Homodimer. It depends on Zn(2+) as a cofactor.

The enzyme catalyses (E)-cinnamyl alcohol + NADP(+) = (E)-cinnamaldehyde + NADPH + H(+). It catalyses the reaction (E)-coniferol + NADP(+) = (E)-coniferaldehyde + NADPH + H(+). It carries out the reaction (E)-sinapyl alcohol + NADP(+) = (E)-sinapaldehyde + NADPH + H(+). The catalysed reaction is (E)-4-coumaroyl alcohol + NADP(+) = (E)-4-coumaraldehyde + NADPH + H(+). The enzyme catalyses (E)-caffeyl alcohol + NADP(+) = (E)-caffeyl aldehyde + NADPH + H(+). The protein operates within aromatic compound metabolism; phenylpropanoid biosynthesis. In terms of biological role, involved in lignin biosynthesis. Catalyzes the final step specific for the production of lignin monomers. Catalyzes the NADPH-dependent reduction of coniferaldehyde, 5-hydroxyconiferaldehyde, sinapaldehyde, 4-coumaraldehyde and caffeyl aldehyde to their respective alcohols. The polypeptide is Probable cinnamyl alcohol dehydrogenase 8C (Oryza sativa subsp. japonica (Rice)).